The sequence spans 275 residues: TATA-box-binding protein (275 aa).

2 disordered regions span residues 23–45 (EDES…FGMN) and 73–92 (GSMS…HTPA). Tandem repeats lie at residues 103 to 179 (LENI…ARIV) and 193 to 270 (IQNM…YPIL).

Belongs to the TBP family. Belongs to the TFIID complex together with the TBP-associated factors (TAFs). Binds DNA as monomer.

Its subcellular location is the nucleus. General transcription factor that functions at the core of the DNA-binding multiprotein factor TFIID. Binding of TFIID to the TATA box is the initial transcriptional step of the pre-initiation complex (PIC), playing a role in the activation of eukaryotic genes transcribed by RNA polymerase II. The protein is TATA-box-binding protein of Artemia franciscana (Brine shrimp).